Consider the following 87-residue polypeptide: Large ribosomal subunit protein bL27 (87 aa).

Belongs to the bacterial ribosomal protein bL27 family.

In Dechloromonas aromatica (strain RCB), this protein is Large ribosomal subunit protein bL27.